The following is a 533-amino-acid chain: MTPRRSRVKRRNLRKPKMRFLLVNRFTLLLLLLVSPTPVLQAPTNLTDSGLDQEPFLYLVGRKKLLDAQYKCYDRIHQLPSYEGEGLYCNRTWDGWMCWDDTPAGATAYQHCPDYFPDFDTAEKVSKYCDENGEWFRHPDSNRTWSNYTLCNAFTSEKLQNAYVLYYLALVGHSLSIAALVASMLIFWIFKNLSCQRVTLHKHMFLTYILNSIIIIIHLVEVVPNGDLVRRDPMHIFHHNTHMWTMQWELSPPLPLSAHEGKMDPHASEVISCKVLHFLHQYMMSCNYFWMLCEGIYLHTLIVMAVFTDEQRLRWYYLLGWGFPIVPTIIHAITRALYYNDNCWLSAETHLLYIIHGPVMVALVVNFFFLLNIVRVLVTKMRQTHEAESYMYLKAVKATMVLVPLLGIQFVVFPWRPSNKVLGKIYDYLMHSLIHFQGFFVATIYCFCNHEVQVTLKRQWTQFKIQWSQRWGRRRRPTNRVVSAPRAVAFAEPDGLPIYICHQEPRNPPISNNEGEESTEMIPMNVIQQDASA.

A signal peptide spans Met1–Gln41. Residues Ala42 to Tyr163 lie on the Extracellular side of the membrane. N-linked (GlcNAc...) asparagine glycosylation is found at Asn45, Asn90, Asn142, and Asn147. Disulfide bonds link Cys72–Cys98, Cys89–Cys129, and Cys112–Cys151. Residues Val164–Ile186 traverse the membrane as a helical segment. Topologically, residues Phe187 to Val198 are cytoplasmic. The helical transmembrane segment at Thr199 to Leu219 threads the bilayer. The Extracellular segment spans residues Val220 to Cys273. The cysteines at positions 273 and 343 are disulfide-linked. The helical transmembrane segment at Lys274–Ile296 threads the bilayer. The Cytoplasmic portion of the chain corresponds to Tyr297 to Leu313. The helical transmembrane segment at Arg314–Thr334 threads the bilayer. At Arg335–His350 the chain is on the extracellular side. The chain crosses the membrane as a helical span at residues Leu351–Val374. The Cytoplasmic portion of the chain corresponds to Arg375–Lys394. A helical membrane pass occupies residues Ala395 to Phe413. Topologically, residues Pro414–Val421 are extracellular. A helical membrane pass occupies residues Leu422–Cys448. Topologically, residues Asn449 to Ala533 are cytoplasmic.

The protein belongs to the G-protein coupled receptor 2 family. Heterodimer of CALCR and RAMP1, RAMP2 or RAMP3; the receptor complexes function as AMYR1, AMYR2 and AMYR3 receptors, respectively, and respond to amylin/IAPP, calcitonin/CT and CGRP1 ligands. Interacts with GPRASP2.

It localises to the cell membrane. Functionally, g protein-coupled receptor activated by ligand peptides amylin (IAPP), calcitonin (CT/CALCA) and calcitonin gene-related peptide type 1 (CGRP1/CALCA). CALCR interacts with receptor-activity-modifying proteins RAMP1, 2 and 3 to form receptor complexes AMYR1, 2 and 3, respectively. IAPP, CT and CGRP1 activate CALCR and AMYRs with distinct modes of receptor activation resulting in specific phenotypes. Ligand binding causes a conformation change that triggers signaling via guanine nucleotide-binding proteins (G proteins) and modulates the activity of downstream effectors. Activates cAMP-dependent pathway. The chain is Calcitonin receptor from Mus musculus (Mouse).